The following is a 262-amino-acid chain: Putative carbamate hydrolase RutD (262 aa).

This sequence belongs to the AB hydrolase superfamily. Hydrolase RutD family.

It catalyses the reaction carbamate + 2 H(+) = NH4(+) + CO2. Functionally, involved in pyrimidine catabolism. May facilitate the hydrolysis of carbamate, a reaction that can also occur spontaneously. This is Putative carbamate hydrolase RutD from Rhizobium rhizogenes (strain K84 / ATCC BAA-868) (Agrobacterium radiobacter).